The chain runs to 436 residues: Cold sensitive U2 snRNA suppressor 1 (436 aa).

Positions 1 to 10 (MARTKSRKRS) are enriched in basic residues. The tract at residues 1–22 (MARTKSRKRSGNNQNKNASVVN) is disordered. Residues 12–22 (NNQNKNASVVN) show a composition bias toward low complexity. Residues Thr-104 and Thr-112 each carry the phosphothreonine modification. At Ser-114 the chain carries Phosphoserine. A disordered region spans residues 374 to 436 (EFENSKEDTQ…SEKQLYTVLK (63 aa)). Over residues 389 to 408 (GRQDDKIDDEVEHKLDHFQE) the composition is skewed to basic and acidic residues.

This sequence to mammalian SAP 145. Some, to C.elegans ZK632.11. Belongs to the CWC complex (or CEF1-associated complex), a spliceosome sub-complex reminiscent of a late-stage spliceosome composed of the U2, U5 and U6 snRNAs and at least BUD13, BUD31, BRR2, CDC40, CEF1, CLF1, CUS1, CWC2, CWC15, CWC21, CWC22, CWC23, CWC24, CWC25, CWC27, ECM2, HSH155, IST3, ISY1, LEA1, MSL1, NTC20, PRP8, PRP9, PRP11, PRP19, PRP21, PRP22, PRP45, PRP46, SLU7, SMB1, SMD1, SMD2, SMD3, SMX2, SMX3, SNT309, SNU114, SPP2, SYF1, SYF2, RSE1 and YJU2. Interacts with RDS3.

Its subcellular location is the nucleus. In terms of biological role, essential splicing protein required for U2 snRNP binding to pre-mRNA during spliceosome assembly. In Saccharomyces cerevisiae (strain ATCC 204508 / S288c) (Baker's yeast), this protein is Cold sensitive U2 snRNA suppressor 1 (CUS1).